We begin with the raw amino-acid sequence, 195 residues long: Ras-related protein Rab-31 (195 aa).

7 residues coordinate GTP: Gly-16, Gly-18, Lys-19, Ser-20, Ser-21, Asp-32, and His-33. Residue Ser-20 coordinates Mg(2+). Short sequence motifs (switch) lie at residues 30–42 (HFDH…IGAS) and 63–79 (AGQE…YRGS). The residue at position 36 (Ser-36) is a Phosphoserine. GTP contacts are provided by Thr-38, Gly-64, Asn-119, Asp-122, Ala-150, and Lys-151. Thr-38 lines the Mg(2+) pocket. Residues Cys-194 and Cys-195 are each lipidated (S-geranylgeranyl cysteine).

It belongs to the small GTPase superfamily. Rab family. In terms of assembly, interacts (in GDP-bound form) with RIN3 and GAPVD1, which function as guanine exchange factors (GEF). Interacts (in GTP-bound form) with EEA1. Interacts with NGFR. Interacts with EGFR. Interacts with OCRL. Interacts (in GTP-bound form) with APPL2; interaction contributes to or enhances recruitment of APPL2 to the phagosomes; interaction enhances Fc-gamma receptor-mediated phagocytosis through PI3K/Akt signaling in macrophages. Requires Mg(2+) as cofactor. As to expression, detected in brain astrocytes, spleen and intestine (at protein level).

The protein resides in the early endosome. It localises to the golgi apparatus. Its subcellular location is the trans-Golgi network. The protein localises to the trans-Golgi network membrane. It is found in the cytoplasmic vesicle. The protein resides in the phagosome. It localises to the phagosome membrane. It catalyses the reaction GTP + H2O = GDP + phosphate + H(+). Its activity is regulated as follows. Regulated by guanine nucleotide exchange factors (GEFs) including RIN3 and GAPVD1 which promote the exchange of bound GDP for free GTP. Regulated by GTPase activating proteins (GAPs) which increase the GTP hydrolysis activity. Inhibited by GDP dissociation inhibitors (GDIs) which prevent Rab-GDP dissociation. Functionally, the small GTPases Rab are key regulators of intracellular membrane trafficking, from the formation of transport vesicles to their fusion with membranes. Rabs cycle between an inactive GDP-bound form and an active GTP-bound form that is able to recruit to membranes different set of downstream effectors directly responsible for vesicle formation, movement, tethering and fusion. Required for the integrity and for normal function of the Golgi apparatus and the trans-Golgi network. Plays a role in insulin-stimulated translocation of GLUT4 to the cell membrane. Plays a role in the maturation of phagosomes that engulf pathogens, such as S.aureus and Mycobacterium. Plays a role in M6PR transport from the trans-Golgi network to endosomes. Plays a role in the internalization of EGFR from the cell membrane into endosomes. This is Ras-related protein Rab-31 from Rattus norvegicus (Rat).